Reading from the N-terminus, the 113-residue chain is MQAKAVARTVRIAPRKARLVIDLIRGKEVGEAFAILRHTPKAASPIIEKVLKSAVANAEHNYDMDVNNLVITQAYVDEGPTLKRFRPRAMGRASAINKRTSHITIVVSEKKEG.

It belongs to the universal ribosomal protein uL22 family. As to quaternary structure, part of the 50S ribosomal subunit.

Functionally, this protein binds specifically to 23S rRNA; its binding is stimulated by other ribosomal proteins, e.g. L4, L17, and L20. It is important during the early stages of 50S assembly. It makes multiple contacts with different domains of the 23S rRNA in the assembled 50S subunit and ribosome. In terms of biological role, the globular domain of the protein is located near the polypeptide exit tunnel on the outside of the subunit, while an extended beta-hairpin is found that lines the wall of the exit tunnel in the center of the 70S ribosome. The polypeptide is Large ribosomal subunit protein uL22 (Geobacillus kaustophilus (strain HTA426)).